A 122-amino-acid polypeptide reads, in one-letter code: Large ribosomal subunit protein uL18 (122 aa).

Basic residues predominate over residues 1–22 (MDKNKKLQSKRLRRRRHVRNKL). Residues 1-25 (MDKNKKLQSKRLRRRRHVRNKLRGS) form a disordered region.

The protein belongs to the universal ribosomal protein uL18 family. As to quaternary structure, part of the 50S ribosomal subunit; part of the 5S rRNA/L5/L18/L25 subcomplex. Contacts the 5S and 23S rRNAs.

Its function is as follows. This is one of the proteins that bind and probably mediate the attachment of the 5S RNA into the large ribosomal subunit, where it forms part of the central protuberance. This is Large ribosomal subunit protein uL18 from Rhodopirellula baltica (strain DSM 10527 / NCIMB 13988 / SH1).